The primary structure comprises 494 residues: Cobyric acid synthase (494 aa).

The GATase cobBQ-type domain maps to 249-443 (EINVTILRLP…LHGIFDNGAW (195 aa)). C330 functions as the Nucleophile in the catalytic mechanism. The active site involves H435.

This sequence belongs to the CobB/CobQ family. CobQ subfamily.

Its pathway is cofactor biosynthesis; adenosylcobalamin biosynthesis. Functionally, catalyzes amidations at positions B, D, E, and G on adenosylcobyrinic A,C-diamide. NH(2) groups are provided by glutamine, and one molecule of ATP is hydrogenolyzed for each amidation. This Crocosphaera subtropica (strain ATCC 51142 / BH68) (Cyanothece sp. (strain ATCC 51142)) protein is Cobyric acid synthase.